Reading from the N-terminus, the 115-residue chain is uncharacterized protein (115 aa).

The MSP domain maps to 1–115; that stretch reads MGVEISLDPP…ETVIKLSAAE (115 aa).

This is an uncharacterized protein from Caenorhabditis elegans.